A 316-amino-acid polypeptide reads, in one-letter code: 2,3-dihydroxyphenylpropionate/2,3-dihydroxicinnamic acid 1,2-dioxygenase (316 aa).

The Proton donor role is filled by histidine 118. Histidine 182 (proton acceptor) is an active-site residue.

The protein belongs to the LigB/MhpB extradiol dioxygenase family. Homotetramer. Fe(2+) serves as cofactor.

It carries out the reaction 3-(2,3-dihydroxyphenyl)propanoate + O2 = (2Z,4E)-2-hydroxy-6-oxonona-2,4-dienedioate + H(+). It catalyses the reaction (2E)-3-(2,3-dihydroxyphenyl)prop-2-enoate + O2 = (2Z,4E,7E)-2-hydroxy-6-oxonona-2,4,7-trienedioate + H(+). Its pathway is aromatic compound metabolism; 3-phenylpropanoate degradation. Catalyzes the non-heme iron(II)-dependent oxidative cleavage of 2,3-dihydroxyphenylpropionic acid and 2,3-dihydroxicinnamic acid into 2-hydroxy-6-ketononadienedioate and 2-hydroxy-6-ketononatrienedioate, respectively. The sequence is that of 2,3-dihydroxyphenylpropionate/2,3-dihydroxicinnamic acid 1,2-dioxygenase from Mycolicibacterium vanbaalenii (strain DSM 7251 / JCM 13017 / BCRC 16820 / KCTC 9966 / NRRL B-24157 / PYR-1) (Mycobacterium vanbaalenii).